Reading from the N-terminus, the 283-residue chain is GDP-polyphosphate phosphotransferase (283 aa).

Belongs to the polyphosphate kinase 2 (PPK2) family. Class I subfamily.

The catalysed reaction is [phosphate](n) + GTP = [phosphate](n+1) + GDP. Its function is as follows. Uses inorganic polyphosphate (polyP) as a donor to convert GDP to GTP. The protein is GDP-polyphosphate phosphotransferase of Mycolicibacterium smegmatis (strain ATCC 700084 / mc(2)155) (Mycobacterium smegmatis).